Reading from the N-terminus, the 216-residue chain is Small ribosomal subunit protein uS3 (216 aa).

A KH type-2 domain is found at 38–106 (IRGYLKKKLY…EIIINILEVR (69 aa)).

It belongs to the universal ribosomal protein uS3 family. In terms of assembly, part of the 30S ribosomal subunit. Forms a tight complex with proteins S10 and S14.

Its function is as follows. Binds the lower part of the 30S subunit head. Binds mRNA in the 70S ribosome, positioning it for translation. The protein is Small ribosomal subunit protein uS3 of Syntrophus aciditrophicus (strain SB).